The following is an 805-amino-acid chain: DNA gyrase subunit B (805 aa).

The Toprim domain maps to 435–550; sequence SEIFIVEGDS…RGYIYIAQPP (116 aa). Residues glutamate 441, aspartate 515, and aspartate 517 each coordinate Mg(2+).

It belongs to the type II topoisomerase GyrB family. As to quaternary structure, heterotetramer, composed of two GyrA and two GyrB chains. In the heterotetramer, GyrA contains the active site tyrosine that forms a transient covalent intermediate with DNA, while GyrB binds cofactors and catalyzes ATP hydrolysis. It depends on Mg(2+) as a cofactor. Requires Mn(2+) as cofactor. Ca(2+) serves as cofactor.

It localises to the cytoplasm. The catalysed reaction is ATP-dependent breakage, passage and rejoining of double-stranded DNA.. A type II topoisomerase that negatively supercoils closed circular double-stranded (ds) DNA in an ATP-dependent manner to modulate DNA topology and maintain chromosomes in an underwound state. Negative supercoiling favors strand separation, and DNA replication, transcription, recombination and repair, all of which involve strand separation. Also able to catalyze the interconversion of other topological isomers of dsDNA rings, including catenanes and knotted rings. Type II topoisomerases break and join 2 DNA strands simultaneously in an ATP-dependent manner. The protein is DNA gyrase subunit B of Caulobacter vibrioides (strain ATCC 19089 / CIP 103742 / CB 15) (Caulobacter crescentus).